Consider the following 189-residue polypeptide: Ion-translocating oxidoreductase complex subunit B (189 aa).

Residues 1–26 (MSAVMIAVVLLGLLALVFGAILGFAA) are hydrophobic. Residues 32–90 (EGDPLVDQVESLLPQTQCGQCGYPGCRPYAEAIAGGDQINKCPPGGTATMEKIAELMGV) enclose the 4Fe-4S domain. 12 residues coordinate [4Fe-4S] cluster: Cys49, Cys52, Cys57, Cys73, Cys114, Cys117, Cys120, Cys124, Cys144, Cys147, Cys150, and Cys154. 4Fe-4S ferredoxin-type domains are found at residues 105–134 (KVAY…GAGK) and 136–164 (MHTV…MLPV).

The protein belongs to the 4Fe4S bacterial-type ferredoxin family. RnfB subfamily. As to quaternary structure, the complex is composed of six subunits: RnfA, RnfB, RnfC, RnfD, RnfE and RnfG. Requires [4Fe-4S] cluster as cofactor.

The protein localises to the cell inner membrane. Part of a membrane-bound complex that couples electron transfer with translocation of ions across the membrane. The sequence is that of Ion-translocating oxidoreductase complex subunit B from Shewanella amazonensis (strain ATCC BAA-1098 / SB2B).